The sequence spans 589 residues: Proton pump-interactor 2 (589 aa).

A coiled-coil region spans residues 205–245 (EDSLAEKEASINRVKSMAVELNEVKKELDAITWKINHLSDK). Basic and acidic residues-rich tracts occupy residues 370–383 (KGGE…REDS), 395–408 (TDKR…KAMD), 426–450 (VYEK…REEQ), and 504–534 (ESDH…KERS). Disordered stretches follow at residues 370 to 450 (KGGE…REEQ) and 485 to 534 (KECE…KERS). Residues 431–500 (KKEEEEVDEE…AKKKAAANSS (70 aa)) adopt a coiled-coil conformation. Residues 568–588 (WVWGLSSAALAVALFLVVLLL) traverse the membrane as a helical segment.

Belongs to the plant Proton pump-interactor protein family. Expressed in seedlings and flowers.

It localises to the cell membrane. The protein resides in the endoplasmic reticulum membrane. Its function is as follows. May regulate plasma membrane ATPase activity. The polypeptide is Proton pump-interactor 2 (PPI2) (Arabidopsis thaliana (Mouse-ear cress)).